Here is a 184-residue protein sequence, read N- to C-terminus: (2E)-enoyl-[ACP] glycyltransferase (184 aa).

This sequence belongs to the FcoT family.

The catalysed reaction is a (3R)-3-[(carboxymethyl)amino]fatty acid + holo-[ACP] + H(+) = a (2E)-enoyl-[ACP] + glycine + H2O. It catalyses the reaction (3R)-3-[(carboxylmethyl)amino]decanoate + holo-[ACP] + H(+) = (2E)-decenoyl-[ACP] + glycine + H2O. Involved in the biosynthesis of a unique class of isonitrile lipopeptides (INLPs) that seem to play a role in metal acquisition in M.marinum. Catalyzes a Michael addition of glycine to the beta-position of an alpha,beta-unsaturated fatty acyl-[ACP], producing a (3R)-3-[(carboxymethyl)amino]fatty acid. Acts on the (2E)-decenoyl moiety loaded on the acyl-carrier protein MmaB, forming the product (3R)-3-[(carboxymethyl)amino]decanoate released from MmaB. The protein is (2E)-enoyl-[ACP] glycyltransferase of Mycobacterium marinum (strain ATCC BAA-535 / M).